Consider the following 426-residue polypeptide: Serine--tRNA ligase (426 aa).

235 to 237 (TAE) is a binding site for L-serine. 266–268 (RRE) serves as a coordination point for ATP. Glutamate 289 is an L-serine binding site. 353 to 356 (EISS) serves as a coordination point for ATP. Serine 389 is an L-serine binding site.

This sequence belongs to the class-II aminoacyl-tRNA synthetase family. Type-1 seryl-tRNA synthetase subfamily. Homodimer. The tRNA molecule binds across the dimer.

It localises to the cytoplasm. It carries out the reaction tRNA(Ser) + L-serine + ATP = L-seryl-tRNA(Ser) + AMP + diphosphate + H(+). The catalysed reaction is tRNA(Sec) + L-serine + ATP = L-seryl-tRNA(Sec) + AMP + diphosphate + H(+). The protein operates within aminoacyl-tRNA biosynthesis; selenocysteinyl-tRNA(Sec) biosynthesis; L-seryl-tRNA(Sec) from L-serine and tRNA(Sec): step 1/1. Catalyzes the attachment of serine to tRNA(Ser). Is also able to aminoacylate tRNA(Sec) with serine, to form the misacylated tRNA L-seryl-tRNA(Sec), which will be further converted into selenocysteinyl-tRNA(Sec). The polypeptide is Serine--tRNA ligase (Nostoc punctiforme (strain ATCC 29133 / PCC 73102)).